A 185-amino-acid chain; its full sequence is Ribosome-recycling factor (185 aa).

The protein belongs to the RRF family.

It localises to the cytoplasm. In terms of biological role, responsible for the release of ribosomes from messenger RNA at the termination of protein biosynthesis. May increase the efficiency of translation by recycling ribosomes from one round of translation to another. The polypeptide is Ribosome-recycling factor (Buchnera aphidicola subsp. Acyrthosiphon pisum (strain Tuc7)).